A 261-amino-acid chain; its full sequence is 14-3-3 protein 9 (261 aa).

A disordered region spans residues 239 to 261; it reads PEDAEDAQKGDATNKAGGGEDAE.

It belongs to the 14-3-3 family. As to quaternary structure, homodimer.

The chain is 14-3-3 protein 9 (TFT9) from Solanum lycopersicum (Tomato).